A 390-amino-acid polypeptide reads, in one-letter code: Ribosomal RNA small subunit methyltransferase H (390 aa).

S-adenosyl-L-methionine contacts are provided by residues 47–49, D66, F93, D122, and Q129; that span reads GGH. Residues 282-390 form a disordered region; sequence SKTPPGLPID…SHREDVEGEQ (109 aa). Residues 305–316 are compositionally biased toward basic and acidic residues; sequence GSEKADEQENNK. The segment covering 348–358 has biased composition (polar residues); that stretch reads SGSSTTYSARS. Composition is skewed to basic and acidic residues over residues 360–372 and 381–390; these read SRHE…REHL and SHREDVEGEQ.

The protein belongs to the methyltransferase superfamily. RsmH family.

The protein localises to the cytoplasm. The catalysed reaction is cytidine(1402) in 16S rRNA + S-adenosyl-L-methionine = N(4)-methylcytidine(1402) in 16S rRNA + S-adenosyl-L-homocysteine + H(+). Functionally, specifically methylates the N4 position of cytidine in position 1402 (C1402) of 16S rRNA. In Corynebacterium kroppenstedtii (strain DSM 44385 / JCM 11950 / CIP 105744 / CCUG 35717), this protein is Ribosomal RNA small subunit methyltransferase H.